Here is a 239-residue protein sequence, read N- to C-terminus: Octanoyltransferase (239 aa).

Positions 48–236 (EGGDELVWLV…AFETVFGETT (189 aa)) constitute a BPL/LPL catalytic domain. Substrate-binding positions include 87–94 (RGGEYTYH), 167–169 (ALG), and 180–182 (GLS). Cysteine 198 (acyl-thioester intermediate) is an active-site residue.

It belongs to the LipB family.

It is found in the cytoplasm. It carries out the reaction octanoyl-[ACP] + L-lysyl-[protein] = N(6)-octanoyl-L-lysyl-[protein] + holo-[ACP] + H(+). The protein operates within protein modification; protein lipoylation via endogenous pathway; protein N(6)-(lipoyl)lysine from octanoyl-[acyl-carrier-protein]: step 1/2. Catalyzes the transfer of endogenously produced octanoic acid from octanoyl-acyl-carrier-protein onto the lipoyl domains of lipoate-dependent enzymes. Lipoyl-ACP can also act as a substrate although octanoyl-ACP is likely to be the physiological substrate. This chain is Octanoyltransferase, found in Rhizobium etli (strain ATCC 51251 / DSM 11541 / JCM 21823 / NBRC 15573 / CFN 42).